An 82-amino-acid polypeptide reads, in one-letter code: Putative membrane protein insertion efficiency factor (82 aa).

It belongs to the UPF0161 family.

It is found in the cell inner membrane. Functionally, could be involved in insertion of integral membrane proteins into the membrane. This is Putative membrane protein insertion efficiency factor from Rickettsia rickettsii (strain Iowa).